The following is a 733-amino-acid chain: Polyribonucleotide nucleotidyltransferase (733 aa).

Residues D488 and D494 each coordinate Mg(2+). A KH domain is found at 555–614 (PRIEVMNIAVDKIRDVIGTGGKVIREIVEQTGAKINIEDDGTIRIASADAKTIEAAKRWI). Residues 624–692 (GVIYQGTVVK…ERGKVRLSMK (69 aa)) enclose the S1 motif domain. The span at 711–722 (EQEKYTEETHKS) shows a compositional bias: basic and acidic residues. Residues 711–733 (EQEKYTEETHKSENKRRRKKKEE) form a disordered region. The span at 723 to 733 (ENKRRRKKKEE) shows a compositional bias: basic residues.

This sequence belongs to the polyribonucleotide nucleotidyltransferase family. The cofactor is Mg(2+).

The protein resides in the cytoplasm. The enzyme catalyses RNA(n+1) + phosphate = RNA(n) + a ribonucleoside 5'-diphosphate. In terms of biological role, involved in mRNA degradation. Catalyzes the phosphorolysis of single-stranded polyribonucleotides processively in the 3'- to 5'-direction. The sequence is that of Polyribonucleotide nucleotidyltransferase from Bartonella henselae (strain ATCC 49882 / DSM 28221 / CCUG 30454 / Houston 1) (Rochalimaea henselae).